A 158-amino-acid polypeptide reads, in one-letter code: Cyclic pyranopterin monophosphate synthase (158 aa).

Residues 76 to 78 (LCH) and 114 to 115 (ME) contribute to the substrate site. Residue Asp-129 is part of the active site.

This sequence belongs to the MoaC family. Homohexamer; trimer of dimers.

It catalyses the reaction (8S)-3',8-cyclo-7,8-dihydroguanosine 5'-triphosphate = cyclic pyranopterin phosphate + diphosphate. It participates in cofactor biosynthesis; molybdopterin biosynthesis. Functionally, catalyzes the conversion of (8S)-3',8-cyclo-7,8-dihydroguanosine 5'-triphosphate to cyclic pyranopterin monophosphate (cPMP). This Shewanella halifaxensis (strain HAW-EB4) protein is Cyclic pyranopterin monophosphate synthase.